We begin with the raw amino-acid sequence, 214 residues long: Pyridoxine/pyridoxamine 5'-phosphate oxidase (214 aa).

Residues 9–12 (RKDY) and Lys67 each bind substrate. FMN is bound by residues 62–67 (RMVLLK), 77–78 (FT), Arg83, Lys84, and Gln106. 3 residues coordinate substrate: Tyr124, Arg128, and Ser132. FMN-binding positions include 141–142 (QS) and Trp186. 192–194 (RLH) serves as a coordination point for substrate. Position 196 (Arg196) interacts with FMN.

The protein belongs to the pyridoxamine 5'-phosphate oxidase family. In terms of assembly, homodimer. Requires FMN as cofactor.

The catalysed reaction is pyridoxamine 5'-phosphate + O2 + H2O = pyridoxal 5'-phosphate + H2O2 + NH4(+). It carries out the reaction pyridoxine 5'-phosphate + O2 = pyridoxal 5'-phosphate + H2O2. The protein operates within cofactor metabolism; pyridoxal 5'-phosphate salvage; pyridoxal 5'-phosphate from pyridoxamine 5'-phosphate: step 1/1. It participates in cofactor metabolism; pyridoxal 5'-phosphate salvage; pyridoxal 5'-phosphate from pyridoxine 5'-phosphate: step 1/1. Its function is as follows. Catalyzes the oxidation of either pyridoxine 5'-phosphate (PNP) or pyridoxamine 5'-phosphate (PMP) into pyridoxal 5'-phosphate (PLP). The chain is Pyridoxine/pyridoxamine 5'-phosphate oxidase from Nostoc sp. (strain PCC 7120 / SAG 25.82 / UTEX 2576).